The following is a 283-amino-acid chain: UPF0276 protein Anae109_1558 (283 aa).

The protein belongs to the UPF0276 family.

The sequence is that of UPF0276 protein Anae109_1558 from Anaeromyxobacter sp. (strain Fw109-5).